The primary structure comprises 197 residues: Putative carbonic anhydrase YvdA (197 aa).

Residues C41, D43, H99, and C102 each contribute to the Zn(2+) site.

Belongs to the beta-class carbonic anhydrase family. Zn(2+) serves as cofactor.

It catalyses the reaction hydrogencarbonate + H(+) = CO2 + H2O. Its function is as follows. Reversible hydration of carbon dioxide. This chain is Putative carbonic anhydrase YvdA (yvdA), found in Bacillus subtilis (strain 168).